The primary structure comprises 283 residues: Movement protein (283 aa).

The segment at 233-283 (SVKRTKSENTPGKRRVNVDSVSLGLGKGKSVSAKNEDTESVFDDGILDSDS) is disordered. Residues 270 to 283 (TESVFDDGILDSDS) are compositionally biased toward acidic residues.

It belongs to the tobamovirus movement protein family.

The protein localises to the host cytoplasm. It localises to the host cytoskeleton. Its subcellular location is the host cell junction. The protein resides in the host plasmodesma. Transports viral genome to neighboring plant cells directly through plasmosdesmata, without any budding. The movement protein allows efficient cell to cell propagation, by bypassing the host cell wall barrier. Forms a ribonucleoprotein complex with viral RNA. Binds microtubules and modulates microtubule stability. Can bind double-stranded DNA. This is Movement protein (MP) from Crotalaria juncea (Sunn hemp).